Reading from the N-terminus, the 49-residue chain is Large ribosomal subunit protein bL33B (49 aa).

It belongs to the bacterial ribosomal protein bL33 family.

In Bacillus cytotoxicus (strain DSM 22905 / CIP 110041 / 391-98 / NVH 391-98), this protein is Large ribosomal subunit protein bL33B.